Consider the following 1233-residue polypeptide: Mitogen-activated protein kinase kinase kinase kinase 4 (1233 aa).

N-acetylalanine is present on Ala2. Ser5 carries the post-translational modification Phosphoserine. Positions Phe25–Arg289 constitute a Protein kinase domain. Residues Val31 to Val39 and Lys53 contribute to the ATP site. Catalysis depends on Asp152, which acts as the Proton acceptor. Disordered regions lie at residues Ile305–Glu348, Gln401–Glu463, and Gln489–Ser805. The span at Asp316 to Gly337 shows a compositional bias: acidic residues. Phosphoserine is present on residues Ser323 and Ser325. Positions Pro521–Gln537 are enriched in basic and acidic residues. The residue at position 543 (Ser543) is a Phosphoserine. Positions Leu544–Asp559 are enriched in polar residues. Phosphoserine is present on residues Ser619, Ser621, Ser629, and Ser646. Residues Leu654–Val663 show a composition bias toward basic and acidic residues. Positions Pro666–Gly692 are enriched in low complexity. A phosphoserine mark is found at Ser691, Ser703, and Ser706. 2 stretches are compositionally biased toward basic and acidic residues: residues Ser713–Arg726 and Lys741–Thr756. Acidic residues predominate over residues Gly766–Asp781. The segment covering Ser783 to Thr803 has biased composition (polar residues). Phosphoserine is present on residues Ser785, Ser794, Ser795, Ser799, and Ser817. Thr822 carries the phosphothreonine modification. A phosphoserine mark is found at Ser846, Ser849, Ser894, and Ser907. The interval Pro852 to Lys1206 is mediates interaction with RAP2A. The CNH domain maps to Asn920–Val1207.

The protein belongs to the protein kinase superfamily. STE Ser/Thr protein kinase family. STE20 subfamily. In terms of assembly, interacts with the SH3 domain of the adapter proteins Nck. Interacts (via its CNH regulatory domain) with ATL1 (via the N-terminal region). Interacts with RAP2A (GTP-bound form preferentially). It depends on Mg(2+) as a cofactor. In terms of tissue distribution, appears to be ubiquitous, expressed in all tissue types examined. Highest levels observed in heart and brain.

The protein localises to the cytoplasm. It carries out the reaction L-seryl-[protein] + ATP = O-phospho-L-seryl-[protein] + ADP + H(+). The enzyme catalyses L-threonyl-[protein] + ATP = O-phospho-L-threonyl-[protein] + ADP + H(+). Functionally, serine/threonine kinase that plays a role in the response to environmental stress and cytokines such as TNF-alpha. Appears to act upstream of the JUN N-terminal pathway. Activator of the Hippo signaling pathway which plays a pivotal role in organ size control and tumor suppression by restricting proliferation and promoting apoptosis. MAP4Ks act in parallel to and are partially redundant with STK3/MST2 and STK4/MST2 in the phosphorylation and activation of LATS1/2, and establish MAP4Ks as components of the expanded Hippo pathway. Phosphorylates SMAD1 on Thr-322. This chain is Mitogen-activated protein kinase kinase kinase kinase 4 (Map4k4), found in Mus musculus (Mouse).